We begin with the raw amino-acid sequence, 539 residues long: Phosphatidylinositol 4-phosphate 5-kinase type-1 beta (539 aa).

Positions 1–21 are disordered; sequence MSSTAENGDAVPGKQNEEKTY. The PIPK domain occupies 25–395; that stretch reads ASSAIKGAIQ…RFLKFMNSRV (371 aa). 3 positions are modified to phosphoserine: Ser445, Ser447, and Ser448.

Interacts with RAC1, AJUBA, PLD1, PLD2 and ARF1.

The protein resides in the cytoplasm. The protein localises to the cytosol. It is found in the cell membrane. Its subcellular location is the endomembrane system. The enzyme catalyses a 1,2-diacyl-sn-glycero-3-phospho-(1D-myo-inositol 4-phosphate) + ATP = a 1,2-diacyl-sn-glycero-3-phospho-(1D-myo-inositol-4,5-bisphosphate) + ADP + H(+). It catalyses the reaction 1-octadecanoyl-2-(5Z,8Z,11Z,14Z)-eicosatetraenoyl-sn-glycero-3-phospho-1D-myo-inositol 4-phosphate + ATP = 1-octadecanoyl-2-(5Z,8Z,11Z,14Z)-eicosatetraenoyl-sn-glycero-3-phospho-1D-myo-inositol 4,5-bisphosphate + ADP + H(+). The catalysed reaction is 1-octadecanoyl-2-(9Z)-octadecenoyl-sn-glycero-3-phospho-1D-myo-inositol 4-phosphate + ATP = 1-octadecanoyl-2-(9Z)-octadecenoyl-sn-glycero-3-phospho-1D-myo-inositol 4,5-bisphosphate + ADP + H(+). It carries out the reaction 1-octadecanoyl-2-(9Z)-octadecenoyl-sn-glycero-3-phospho-1D-myo-inositol + ATP = 1-octadecanoyl-2-(9Z)-octadecenoyl-sn-glycero-3-phospho-1D-myo-inositol 5-phosphate + ADP + H(+). The enzyme catalyses 1-octadecanoyl-2-(9Z,12Z)-octadecadienoyl-sn-glycero-3-phospho-1D-myo-inositol + ATP = 1-octadecanoyl-2-(9Z,12Z)-octadecadienoyl-sn-glycero-3-phospho-1D-myo-inositol 5-phosphate + ADP + H(+). It catalyses the reaction 1-octadecanoyl-2-(5Z,8Z,11Z,14Z-eicosatetraenoyl)-sn-glycero-3-phospho-(1D-myo-inositol) + ATP = 1-octadecanoyl-2-(5Z,8Z,11Z,14Z)-eicosatetraenoyl-sn-glycero-3-phospho-1D-myo-inositol 5-phosphate + ADP + H(+). The catalysed reaction is 1,2-di-(9Z,12Z)-octadecadienoyl-sn-glycero-3-phospho-1D-myo-inositol + ATP = 1,2-di(9Z,12Z)-octadecadienoyl-sn-glycero-3-phospho-1D-myo-inositol 5-phosphate + ADP + H(+). Its function is as follows. Catalyzes the phosphorylation of phosphatidylinositol 4-phosphate (PtdIns(4)P/PI4P) to form phosphatidylinositol 4,5-bisphosphate (PtdIns(4,5)P2/PIP2), a lipid second messenger that regulates several cellular processes such as signal transduction, vesicle trafficking, actin cytoskeleton dynamics, cell adhesion, and cell motility. PtdIns(4,5)P2 can directly act as a second messenger or can be utilized as a precursor to generate other second messengers: inositol 1,4,5-trisphosphate (IP3), diacylglycerol (DAG) or phosphatidylinositol-3,4,5-trisphosphate (PtdIns(3,4,5)P3/PIP3). Mediates RAC1-dependent reorganization of actin filaments. Contributes to the activation of phospholipase PLD2. Together with PIP5K1A, is required, after stimulation by G-protein coupled receptors, for the synthesis of IP3 that will induce stable platelet adhesion. The polypeptide is Phosphatidylinositol 4-phosphate 5-kinase type-1 beta (Rattus norvegicus (Rat)).